The following is a 281-amino-acid chain: tRNA uridine(34) hydroxylase (281 aa).

The Rhodanese domain maps to 121–214 (SQPDVLVIDT…YLEKTHNKSG (94 aa)). Catalysis depends on cysteine 174, which acts as the Cysteine persulfide intermediate.

Belongs to the TrhO family.

The catalysed reaction is uridine(34) in tRNA + AH2 + O2 = 5-hydroxyuridine(34) in tRNA + A + H2O. Catalyzes oxygen-dependent 5-hydroxyuridine (ho5U) modification at position 34 in tRNAs. This is tRNA uridine(34) hydroxylase from Wolbachia pipientis subsp. Culex pipiens (strain wPip).